A 444-amino-acid polypeptide reads, in one-letter code: MIEDNKENKDHSLERGRASLIFSLKNEVGGLIKALKIFQEKHVNLLHIESRKSKRRNSEFEIFVDCDINREQLNDIFHLLKSHTNVLSVNLPDNFTLKEDGMETVPWFPKKISDLDHCANRVLMYGSELDADHPGFKDNVYRKRRKYFADLAMNYKHGDPIPKVEFTEEEIKTWGTVFQELNKLYPTHACREYLKNLPLLSKYCGYREDNIPQLEDVSNFLKERTGFSIRPVAGYLSPRDFLSGLAFRVFHCTQYVRHSSDPFYTPEPDTCHELLGHVPLLAEPSFAQFSQEIGLASLGASEEAVQKLATCYFFTVEFGLCKQDGQLRVFGAGLLSSISELKHALSGHAKVKPFDPKITCKQECLITTFQDVYFVSESFEDAKEKMREFTKTIKRPFGVKYNPYTRSIQILKDTKSITSAMNELQHDLDVVSDALAKVSRKPSI.

The region spanning 19-94 (SLIFSLKNEV…NVLSVNLPDN (76 aa)) is the ACT domain. A Phosphoserine; by PKA modification is found at serine 58. L-tryptophan-binding residues include tyrosine 235, arginine 257, and threonine 265. Positions 272, 277, and 317 each coordinate Fe cation. L-tryptophan contacts are provided by serine 336 and isoleucine 366.

It belongs to the biopterin-dependent aromatic amino acid hydroxylase family. As to quaternary structure, homotetramer. Interacts with DNAJC12. Fe(2+) is required as a cofactor. Ubiquitinated, leading to its degradation by the proteasome. Ubiquitinated is triggered by phosphorylation. Post-translationally, phosphorylated; triggering degradation by the proteasome. As to expression, seems to be less widely expressed than isoform 1.

It catalyses the reaction (6R)-L-erythro-5,6,7,8-tetrahydrobiopterin + L-tryptophan + O2 = 5-hydroxy-L-tryptophan + (4aS,6R)-4a-hydroxy-L-erythro-5,6,7,8-tetrahydrobiopterin. Its pathway is aromatic compound metabolism; serotonin biosynthesis; serotonin from L-tryptophan: step 1/2. Oxidizes L-tryptophan to 5-hydroxy-l-tryptophan in the rate-determining step of serotonin biosynthesis. The polypeptide is Tryptophan 5-hydroxylase 1 (TPH1) (Homo sapiens (Human)).